Reading from the N-terminus, the 134-residue chain is Arsenate reductase (134 aa).

Residues C11, C83, and C90 each act as nucleophile in the active site. Intrachain disulfides connect C11–C83 and C83–C90.

Belongs to the low molecular weight phosphotyrosine protein phosphatase family. Thioredoxin-coupled ArsC subfamily.

The protein resides in the cytoplasm. It catalyses the reaction arsenate + [thioredoxin]-dithiol + H(+) = arsenite + [thioredoxin]-disulfide + H2O. Catalyzes the reduction of arsenate [As(V)] to arsenite [As(III)]. The chain is Arsenate reductase from Bacillus cereus (strain ATCC 14579 / DSM 31 / CCUG 7414 / JCM 2152 / NBRC 15305 / NCIMB 9373 / NCTC 2599 / NRRL B-3711).